The chain runs to 103 residues: Large ribosomal subunit protein bL21 (103 aa).

This sequence belongs to the bacterial ribosomal protein bL21 family. Part of the 50S ribosomal subunit. Contacts protein L20.

Its function is as follows. This protein binds to 23S rRNA in the presence of protein L20. The protein is Large ribosomal subunit protein bL21 of Mycobacterium tuberculosis (strain ATCC 25618 / H37Rv).